We begin with the raw amino-acid sequence, 249 residues long: Probable transcriptional regulatory protein HY04AAS1_0501 (249 aa).

The protein belongs to the TACO1 family.

The protein localises to the cytoplasm. This chain is Probable transcriptional regulatory protein HY04AAS1_0501, found in Hydrogenobaculum sp. (strain Y04AAS1).